We begin with the raw amino-acid sequence, 489 residues long: Long chain base biosynthesis protein 2d (489 aa).

The chain crosses the membrane as a helical span at residues 4–24; it reads LPYVTALTTLFSYGLLFAFGQ. The residue at position 311 (Lys-311) is an N6-(pyridoxal phosphate)lysine.

Belongs to the class-II pyridoxal-phosphate-dependent aminotransferase family. In terms of assembly, heterodimer with LCB1. Component of the serine palmitoyltransferase (SPT) complex, composed of LCB1 and LCB2. It depends on pyridoxal 5'-phosphate as a cofactor.

It localises to the endoplasmic reticulum membrane. The enzyme catalyses L-serine + hexadecanoyl-CoA + H(+) = 3-oxosphinganine + CO2 + CoA. It participates in lipid metabolism; sphingolipid metabolism. Its function is as follows. Serine palmitoyltransferase (SPT). The heterodimer formed with LCB1 constitutes the catalytic core. This is Long chain base biosynthesis protein 2d from Oryza sativa subsp. japonica (Rice).